The primary structure comprises 603 residues: Geraniol synthase, chloroplastic (603 aa).

The N-terminal 35 residues, 1–35 (MSSISQKVVIGLNKAAANNNLQNLDRRGFKTRCVS), are a transit peptide targeting the chloroplast. (2E)-geranyl diphosphate is bound by residues Arg319, Asp356, Asp360, Arg497, and Asp500. Residues Asp356 and Asp360 each coordinate Mg(2+). The short motif at 356–360 (DDVYD) is the DDXXD motif element. Mg(2+) contacts are provided by Asp500, Thr504, and Glu508.

It belongs to the terpene synthase family. Tpsb subfamily. As to quaternary structure, monomer. Mg(2+) is required as a cofactor. It depends on Mn(2+) as a cofactor.

Its subcellular location is the plastid. The protein resides in the chloroplast. The catalysed reaction is (2E)-geranyl diphosphate + H2O = (2E)-geraniol + diphosphate. It functions in the pathway secondary metabolite biosynthesis; terpenoid biosynthesis. Monoterpene synthase (mono-TPS) involved in the biosynthesis of monoterpenes natural products. Catalyzes the conversion of (2E)-geranyl diphosphate (GPP) into geraniol. The protein is Geraniol synthase, chloroplastic of Perilla frutescens var. hirtella (Perilla citriodora).